The following is a 429-amino-acid chain: MDRIRIVGGAQLNGTIPISGAKNAALPLMIAGLLTDETLILDNVPRLADVAQLQRILGNHGVDIMAAGKRPGDHEYQGQTLHISAKNIIDTTAPYELVSKMRASFWVIAPLLARMHEAKVSLPGGCAIGTRPVDLLIMALEKLGATLTIDGGYVIASAPGGLKGAAIEFPKVTVSGTHVALMAATLARGTTVIGNAACEPEIVDVADCLNKMGGKISGAGTPRITIEGVAKLHGARHTVLPDRIETGTYAMAVAMTGGDVQLSGARPELLQSALDVLTQAGATITVNNDGIRVTRNGAGLNPVTVTTAPFPGFPTDLQAQLMALMACAKGASHITETIFENRFMHVQELARFGARIQLDGETATIDGVAKLRGAPVMATDLRASVSLVIAGLAAEGETMVNRIYHLDRGFERLEEKLSACGATIERISG.

22–23 (KN) serves as a coordination point for phosphoenolpyruvate. Residue arginine 102 participates in UDP-N-acetyl-alpha-D-glucosamine binding. The active-site Proton donor is the cysteine 126. A 2-(S-cysteinyl)pyruvic acid O-phosphothioketal modification is found at cysteine 126. UDP-N-acetyl-alpha-D-glucosamine contacts are provided by residues 131 to 135 (RPVDL), aspartate 316, and isoleucine 338.

Belongs to the EPSP synthase family. MurA subfamily.

The protein localises to the cytoplasm. The catalysed reaction is phosphoenolpyruvate + UDP-N-acetyl-alpha-D-glucosamine = UDP-N-acetyl-3-O-(1-carboxyvinyl)-alpha-D-glucosamine + phosphate. The protein operates within cell wall biogenesis; peptidoglycan biosynthesis. Cell wall formation. Adds enolpyruvyl to UDP-N-acetylglucosamine. This is UDP-N-acetylglucosamine 1-carboxyvinyltransferase from Rhodopseudomonas palustris (strain BisB18).